Consider the following 1019-residue polypeptide: StAR-related lipid transfer protein 8 (1019 aa).

Disordered stretches follow at residues 92–122 (QPLL…KVKK) and 134–154 (SLRR…CLAT). Over residues 100–115 (SPSNQPFLSPPQGQEG) the composition is skewed to polar residues. Position 108 is a phosphoserine (serine 108). Residues 134-147 (SLRRKEKGDSRQTE) are compositionally biased toward basic and acidic residues. The residue at position 168 (arginine 168) is an Asymmetric dimethylarginine. Residues serine 234 and serine 237 each carry the phosphoserine modification. Disordered regions lie at residues 325–355 (MYPD…EVAT) and 406–482 (APAQ…VGAS). The span at 334-347 (KEEEEEEEEEEEEA) shows a compositional bias: acidic residues. 2 stretches are compositionally biased toward polar residues: residues 418-430 (NSTA…SSLS) and 437-455 (ISDT…NSMN). Residues serine 494 and serine 502 each carry the phosphoserine modification. Residues 569-773 (PPLIHVQRTG…HMISDCKKLF (205 aa)) form the Rho-GAP domain. The tract at residues 731–754 (DSSSPRIKSKRSLVGRPGPRDLSE) is disordered. One can recognise an START domain in the interval 805 to 1013 (AQAAGVSLSL…RDSFPTLQAA (209 aa)).

Binds both the SH2 and PTB domains of TNS1.

The protein localises to the cell junction. The protein resides in the focal adhesion. Functionally, accelerates GTPase activity of RHOA and CDC42, but not RAC1. Stimulates the hydrolysis of phosphatidylinositol 4,5-bisphosphate by PLCD1. This is StAR-related lipid transfer protein 8 (Stard8) from Mus musculus (Mouse).